The following is a 199-amino-acid chain: Pyridoxal 5'-phosphate synthase subunit PdxT (199 aa).

An L-glutamine-binding site is contributed by 52–54 (GES). The active-site Nucleophile is the C84. L-glutamine-binding positions include R115 and 143-144 (IR). Active-site charge relay system residues include H179 and E181.

It belongs to the glutaminase PdxT/SNO family. As to quaternary structure, in the presence of PdxS, forms a dodecamer of heterodimers. Only shows activity in the heterodimer.

It carries out the reaction aldehydo-D-ribose 5-phosphate + D-glyceraldehyde 3-phosphate + L-glutamine = pyridoxal 5'-phosphate + L-glutamate + phosphate + 3 H2O + H(+). The catalysed reaction is L-glutamine + H2O = L-glutamate + NH4(+). Its pathway is cofactor biosynthesis; pyridoxal 5'-phosphate biosynthesis. Catalyzes the hydrolysis of glutamine to glutamate and ammonia as part of the biosynthesis of pyridoxal 5'-phosphate. The resulting ammonia molecule is channeled to the active site of PdxS. This chain is Pyridoxal 5'-phosphate synthase subunit PdxT, found in Methanosarcina mazei (strain ATCC BAA-159 / DSM 3647 / Goe1 / Go1 / JCM 11833 / OCM 88) (Methanosarcina frisia).